The following is a 2035-amino-acid chain: Ral GTPase-activating protein subunit alpha-1 (2035 aa).

Disordered stretches follow at residues 343–384 (LVSR…SSLC) and 477–496 (DGEK…VRNS). The span at 345 to 365 (SREESKNDTVDKVDKSAEPEQ) shows a compositional bias: basic and acidic residues. Composition is skewed to polar residues over residues 366-384 (SHSN…SSLC) and 486-496 (GTSTSEHVRNS). Phosphoserine occurs at positions 710 and 720. Residues 714 to 752 (SFSRGWSRDQPGQAPMRQRSATTTGSPGTEKARSIVRQK) form a disordered region. T753 bears the Phosphothreonine mark. Phosphoserine is present on S772. Phosphothreonine is present on T777. The residue at position 796 (S796) is a Phosphoserine. Residues 807 to 817 (ERAKVNKEDTS) show a composition bias toward basic and acidic residues. 2 disordered regions span residues 807–834 (ERAK…SANV) and 848–911 (SGNA…SHSD). Polar residues-rich tracts occupy residues 824–833 (NSETGGNSAN) and 849–862 (GNAS…SSPG). Phosphoserine is present on residues S859, S860, and S863. Positions 894 to 911 (SPASAGSSDLMSSDSHSD) are enriched in low complexity. S985, S989, S993, and S999 each carry phosphoserine. Residues 986–1008 (ESASPVHSALGSRSQTPSPSTLS) show a composition bias toward polar residues. Residues 986 to 1011 (ESASPVHSALGSRSQTPSPSTLSRAH) form a disordered region. The residue at position 1001 (T1001) is a Phosphothreonine. Phosphoserine is present on residues S1003 and S1477. Positions 1326–2035 (FTNKTVAHVA…YHHFPADADH (710 aa)) are minimal domain that binds to TCF3/E12. Positions 1713-1748 (SEKQENDVINAILKQYTEEKEFVEKHFNDLNMKASE) form a coiled coil. Residues 1795–2003 (LRNLDSRQCR…EERARYLQTI (209 aa)) form the Rap-GAP domain.

As to quaternary structure, component of the heterodimeric RalGAP1 complex with RALGAPB. Heterodimerization is required for activity. Interacts with the HLH region of TCF3/isoform E12. In terms of tissue distribution, expressed during embryogenesis. Expressed in the adult brain, particularly in neurons of the cortex and hippocampus.

Its subcellular location is the cytoplasm. It localises to the nucleus. Catalytic subunit of the heterodimeric RalGAP1 complex which acts as a GTPase activator for the Ras-like small GTPases RALA and RALB. May interact with the HLH region of TCF3/isoform E12. In Mus musculus (Mouse), this protein is Ral GTPase-activating protein subunit alpha-1 (Ralgapa1).